Reading from the N-terminus, the 200-residue chain is Cytochrome c biogenesis ATP-binding export protein CcmA (200 aa).

An ABC transporter domain is found at Met-1–Ala-200. Gly-35–Thr-42 is an ATP binding site.

It belongs to the ABC transporter superfamily. CcmA exporter (TC 3.A.1.107) family. The complex is composed of two ATP-binding proteins (CcmA) and two transmembrane proteins (CcmB).

It is found in the cell inner membrane. The enzyme catalyses heme b(in) + ATP + H2O = heme b(out) + ADP + phosphate + H(+). Part of the ABC transporter complex CcmAB involved in the biogenesis of c-type cytochromes; once thought to export heme, this seems not to be the case, but its exact role is uncertain. Responsible for energy coupling to the transport system. The chain is Cytochrome c biogenesis ATP-binding export protein CcmA from Nitrobacter winogradskyi (strain ATCC 25391 / DSM 10237 / CIP 104748 / NCIMB 11846 / Nb-255).